We begin with the raw amino-acid sequence, 515 residues long: Putative myristoylated protein 118L (515 aa).

Gly2 carries N-myristoyl glycine; by host lipidation. Helical transmembrane passes span 188–208 (LSLA…VGGV), 214–234 (IIFP…FQWT), and 482–502 (WLLY…AFSS).

It belongs to the IIV-6 118L/458R family.

Its subcellular location is the membrane. The sequence is that of Putative myristoylated protein 118L from Acheta domesticus (House cricket).